We begin with the raw amino-acid sequence, 336 residues long: Phosphonate dehydrogenase (336 aa).

NAD(+)-binding positions include 155 to 156, Glu-175, 235 to 237, and Asp-261; these read AI and PCR. Residue Arg-237 is part of the active site. Residue Glu-266 is part of the active site. His-292 serves as the catalytic Proton donor. An NAD(+)-binding site is contributed by 292–295; that stretch reads HIGS.

In terms of assembly, homodimer.

The catalysed reaction is phosphonate + NAD(+) + H2O = phosphate + NADH + H(+). Its activity is regulated as follows. Inhibited by NaCl, NADH and sulfite. Catalyzes phosphite (phosphonate) oxidation. The protein is Phosphonate dehydrogenase (ptxD) of Stutzerimonas stutzeri (Pseudomonas stutzeri).